Consider the following 325-residue polypeptide: Heat-inducible transcription repressor HrcA (325 aa).

The protein belongs to the HrcA family.

In terms of biological role, negative regulator of class I heat shock genes (grpE-dnaK-dnaJ and groELS operons). Prevents heat-shock induction of these operons. This chain is Heat-inducible transcription repressor HrcA, found in Staphylococcus epidermidis (strain ATCC 35984 / DSM 28319 / BCRC 17069 / CCUG 31568 / BM 3577 / RP62A).